The sequence spans 626 residues: tRNA 5-methylaminomethyl-2-thiouridine biosynthesis bifunctional protein MnmC (626 aa).

The segment at 1 to 237 (MKGPQLDYAD…KRDMTVGVFQ (237 aa)) is tRNA (mnm(5)s(2)U34)-methyltransferase. Residues 255-626 (IGSGLSGANV…RVLPNRFSQE (372 aa)) are FAD-dependent cmnm(5)s(2)U34 oxidoreductase.

It in the N-terminal section; belongs to the methyltransferase superfamily. tRNA (mnm(5)s(2)U34)-methyltransferase family. This sequence in the C-terminal section; belongs to the DAO family. The cofactor is FAD.

The protein localises to the cytoplasm. It catalyses the reaction 5-aminomethyl-2-thiouridine(34) in tRNA + S-adenosyl-L-methionine = 5-methylaminomethyl-2-thiouridine(34) in tRNA + S-adenosyl-L-homocysteine + H(+). In terms of biological role, catalyzes the last two steps in the biosynthesis of 5-methylaminomethyl-2-thiouridine (mnm(5)s(2)U) at the wobble position (U34) in tRNA. Catalyzes the FAD-dependent demodification of cmnm(5)s(2)U34 to nm(5)s(2)U34, followed by the transfer of a methyl group from S-adenosyl-L-methionine to nm(5)s(2)U34, to form mnm(5)s(2)U34. The polypeptide is tRNA 5-methylaminomethyl-2-thiouridine biosynthesis bifunctional protein MnmC (Hahella chejuensis (strain KCTC 2396)).